A 1270-amino-acid polypeptide reads, in one-letter code: Vigilin (1270 aa).

The segment covering 1–11 (MSSVAVLTQES) has biased composition (polar residues). Disordered stretches follow at residues 1 to 23 (MSSVAVLTQESFAEHRSGLTQQQ) and 28 to 47 (ALNSEEENDPPTYKEAFPPL). KH domains lie at 150–188 (ASATVAIPKEHHRFVIGKNGEKLQDLELKTATKIQIPRP), 219–260 (DKRA…IPPP), 291–333 (KKKT…IPPT), 360–402 (ANSF…EFTE), 431–473 (INRT…IPPD), 504–545 (ENER…NFPD), 577–619 (VENS…LPGR), 651–693 (ANIT…FPTE), 724–766 (QTKS…FPTS), 798–840 (DNVV…LPTV), and 872–913 (EAQV…FPDR). The tract at residues 911–947 (PDREENPAPVAEPALQENGEEGGEGKDGKDADPSSPR) is disordered. Positions 933-947 (GEGKDGKDADPSSPR) are enriched in basic and acidic residues. 3 KH domains span residues 970 to 1012 (ALVP…VPAP), 1051 to 1093 (ALRS…FPDK), and 1126 to 1168 (LEQM…FPQS). The tract at residues 1217–1270 (SHEESKVPSKGFVVRDAPCGTVNNEKAPDMSSSEDFPSFGAQVAPKTLPWGPKR) is disordered.

It localises to the cytoplasm. This chain is Vigilin (HDLBP), found in Gallus gallus (Chicken).